An 89-amino-acid polypeptide reads, in one-letter code: Small ribosomal subunit protein uS15 (89 aa).

Belongs to the universal ribosomal protein uS15 family. Part of the 30S ribosomal subunit. Forms a bridge to the 50S subunit in the 70S ribosome, contacting the 23S rRNA.

One of the primary rRNA binding proteins, it binds directly to 16S rRNA where it helps nucleate assembly of the platform of the 30S subunit by binding and bridging several RNA helices of the 16S rRNA. Functionally, forms an intersubunit bridge (bridge B4) with the 23S rRNA of the 50S subunit in the ribosome. The chain is Small ribosomal subunit protein uS15 from Cupriavidus necator (strain ATCC 17699 / DSM 428 / KCTC 22496 / NCIMB 10442 / H16 / Stanier 337) (Ralstonia eutropha).